Reading from the N-terminus, the 200-residue chain is Putative manganese exporter (200 aa).

6 consecutive transmembrane segments (helical) span residues 13–33 (TEHV…AEIG), 53–73 (IIAA…WLGV), 81–101 (PDIL…WILI), 110–130 (SIST…AEIG), 150–170 (WVIV…VLIG), and 180–200 (GLIR…TAFF).

This sequence belongs to the GDT1 family.

It localises to the cell inner membrane. Involved in manganese homeostasis. May function as a manganese exporter. This is Putative manganese exporter from Vibrio cholerae serotype O1 (strain ATCC 39541 / Classical Ogawa 395 / O395).